Here is a 297-residue protein sequence, read N- to C-terminus: Cyclin-dependent kinase 1 (297 aa).

Residues 4–293 (YQKVEKIGEG…AKRALQQNYL (290 aa)) enclose the Protein kinase domain. ATP is bound by residues 10–18 (IGEGTYGVV) and K33. Residue T14 is modified to Phosphothreonine. Residue Y15 is modified to Phosphotyrosine. D134 serves as the catalytic Proton acceptor. At T167 the chain carries Phosphothreonine.

Belongs to the protein kinase superfamily. CMGC Ser/Thr protein kinase family. CDC2/CDKX subfamily. As to quaternary structure, forms a stable but non-covalent complex with regulatory subunit suc1 and with a cyclin. Interacts with cyclin cdc13. Interacts with cyclin cig2. Interacts with cdc37.

It is found in the cytoplasm. The enzyme catalyses L-seryl-[protein] + ATP = O-phospho-L-seryl-[protein] + ADP + H(+). It catalyses the reaction L-threonyl-[protein] + ATP = O-phospho-L-threonyl-[protein] + ADP + H(+). Phosphorylation at Thr-14 or Tyr-15 inactivates the enzyme, while phosphorylation at Thr-167 activates it. Its function is as follows. Cyclin-dependent kinase that acts as a master regulator of the mitotic and meiotic cell cycles. Required to drive the G1-S and G2-M transitions, and initiation of premeiotic DNA replication and meiosis II. More than 200 substrates have been identified. Substrate specificity is in part regulated by the bound cyclin protein. When complexed with cyclin cig2, it drives the G1-S phase transition. When complexed with cyclin cdc13, it drives the G2-M transition and initiation of meiosis II. Its activity rises throughout the cell cycle and substrate specificity is further influenced by activity thresholds with more sensitive substrates phosphorylated earlier in the cell cycle than less sensitive substrates. Phosphorylates dis1 during metaphase to ensure proper microtubule dynamics and accurate chromosome segregation. Phosphorylates the repetitive C-terminus of the large subunit of RNA polymerase II rpb1. Inactivated by checkpoint signaling following detection of cellular damage, leading to cell cycle arrest to allow damage repair. Inactivated during G2 DNA damage checkpoint signaling. Inactivated in response to defective RNA splicing. This Schizosaccharomyces pombe (strain 972 / ATCC 24843) (Fission yeast) protein is Cyclin-dependent kinase 1.